The sequence spans 296 residues: Release factor glutamine methyltransferase (296 aa).

Residues 133 to 137, Asp-156, and Asn-201 each bind S-adenosyl-L-methionine; that span reads GTGSG. 201–204 provides a ligand contact to substrate; it reads NPPY.

It belongs to the protein N5-glutamine methyltransferase family. PrmC subfamily.

The catalysed reaction is L-glutaminyl-[peptide chain release factor] + S-adenosyl-L-methionine = N(5)-methyl-L-glutaminyl-[peptide chain release factor] + S-adenosyl-L-homocysteine + H(+). Methylates the class 1 translation termination release factors RF1/PrfA and RF2/PrfB on the glutamine residue of the universally conserved GGQ motif. In Rhodopirellula baltica (strain DSM 10527 / NCIMB 13988 / SH1), this protein is Release factor glutamine methyltransferase.